The chain runs to 393 residues: NAD(P)H-quinone oxidoreductase subunit H, chloroplastic (393 aa).

It belongs to the complex I 49 kDa subunit family. NDH is composed of at least 16 different subunits, 5 of which are encoded in the nucleus.

It localises to the plastid. The protein resides in the chloroplast thylakoid membrane. The enzyme catalyses a plastoquinone + NADH + (n+1) H(+)(in) = a plastoquinol + NAD(+) + n H(+)(out). It carries out the reaction a plastoquinone + NADPH + (n+1) H(+)(in) = a plastoquinol + NADP(+) + n H(+)(out). Its function is as follows. NDH shuttles electrons from NAD(P)H:plastoquinone, via FMN and iron-sulfur (Fe-S) centers, to quinones in the photosynthetic chain and possibly in a chloroplast respiratory chain. The immediate electron acceptor for the enzyme in this species is believed to be plastoquinone. Couples the redox reaction to proton translocation, and thus conserves the redox energy in a proton gradient. The protein is NAD(P)H-quinone oxidoreductase subunit H, chloroplastic of Brachypodium distachyon (Purple false brome).